Consider the following 1250-residue polypeptide: DNA excision repair protein ERCC-6-like (1250 aa).

Position 14 is a phosphoserine (Ser-14). The TPR 1 repeat unit spans residues 21–54; it reads YLRYVKEAKEATKNGDLEEAFKLFNLAKDIFPNE. In terms of domain architecture, Helicase ATP-binding spans 109 to 277; that stretch reads SLYRDGRKGG…WSLFDFACQG (169 aa). 122–129 lines the ATP pocket; it reads DDMGLGKT. Positions 228 to 231 match the DEAH box motif; sequence DEAH. In terms of domain architecture, Helicase C-terminal spans 464-620; it reads FLMDLLKRLR…EKKNPFRYFS (157 aa). The tract at residues 735–768 is disordered; the sequence is VFPSSTKKKCPKLNKPQPQPSPLLSTHHTQEEDI. A phosphoserine mark is found at Ser-755, Ser-774, Ser-807, and Ser-810. Residue Thr-813 is modified to Phosphothreonine. Ser-820 is modified (phosphoserine). Residues 926–946 are disordered; that stretch reads SALQDAQASEAKLEEEPSASS. Ser-969, Ser-971, Ser-995, Ser-1004, and Ser-1028 each carry phosphoserine. The segment at 1061–1092 is disordered; that stretch reads ASTPKNDISPPGRFFSSQIPSSVNKSMNSRRS. Residue Thr-1063 is modified to Phosphothreonine; by PLK1. A Phosphoserine modification is found at Ser-1069. Polar residues predominate over residues 1075 to 1087; it reads FSSQIPSSVNKSM. A phosphoserine mark is found at Ser-1098 and Ser-1118. The disordered stretch occupies residues 1110 to 1199; sequence MEERLDDSSE…QDKAAEATND (90 aa). A compositionally biased stretch (basic and acidic residues) spans 1115–1124; that stretch reads DDSSEAKGPE. Positions 1125–1135 are enriched in acidic residues; it reads DYPEEGVEESS. The segment covering 1149-1173 has biased composition (polar residues); it reads ETLSSENKSSWLMTSKPSALAQETS. Phosphoserine occurs at positions 1181 and 1188. The stretch at 1200 to 1233 is one TPR 2 repeat; sequence YETLVKRGKELKECGKIQEALNCLVKALDIKSAD.

Belongs to the SNF2/RAD54 helicase family. Interacts with PLK1, which phosphorylates it. Both proteins are mutually dependent on each other for correct subcellular localization. Interacts (via N-terminal TPR repeat) with BEND3 (via BEN domains 1 and 3); the interaction is direct. Phosphorylation by PLK1 prevents the association with chromosome arms and restricts its localization to the kinetochore-centromere region.

The protein localises to the chromosome. Its subcellular location is the centromere. It is found in the kinetochore. It catalyses the reaction ATP + H2O = ADP + phosphate + H(+). In terms of biological role, DNA helicase that acts as a tension sensor that associates with catenated DNA which is stretched under tension until it is resolved during anaphase. Functions as ATP-dependent DNA translocase. Can promote Holliday junction branch migration (in vitro). This is DNA excision repair protein ERCC-6-like (ERCC6L) from Homo sapiens (Human).